The primary structure comprises 568 residues: Serine/threonine-protein kinase RIO1 (568 aa).

Disordered stretches follow at residues 14–70 (GQFD…DDDW) and 83–109 (YVWN…STPA). A phosphoserine mark is found at serine 21 and serine 22. The span at 24-38 (SENRDLKTVKEKDDI) shows a compositional bias: basic and acidic residues. Residues 51–70 (GEGEIEDEEEEGYDDDDDDW) show a composition bias toward acidic residues. Positions 87 to 105 (GGSNPQANRQTSDSSSAKM) are enriched in polar residues. The region spanning 180–479 (TEINGCISTG…TGLKKDLSGV (300 aa)) is the Protein kinase domain. Lysine 208, serine 278, and isoleucine 280 together coordinate ATP. Aspartate 324 acts as the Proton acceptor in catalysis. The Mg(2+) site is built by asparagine 329 and aspartate 341. Aspartate 341 acts as the 4-aspartylphosphate intermediate in catalysis. The segment at 490-568 (VEERTCSDSE…EKTAKTKKGK (79 aa)) is disordered. Over residues 497-513 (DSEDIGSSECSDTDSEE) the composition is skewed to acidic residues. Positions 514–543 (QGDHARPKKHTTDPDIDKKERKKMVKEAQR) are enriched in basic and acidic residues. Over residues 544 to 568 (EKRKNKIPKHVKKRKEKTAKTKKGK) the composition is skewed to basic residues.

Belongs to the protein kinase superfamily. RIO-type Ser/Thr kinase family. In terms of assembly, associates with the precursor of the 40S ribosome subunit. Interacts (via its N-terminus) with PRMT5 (via its N-terminus). Interacts with WDR77. Found in a PRMT5 complex composed of PRMT5, WDR77 and RIOK1. Interacts (via its C-terminus) with NCL; this interaction targets NCL for PRTM5 methylation. The cofactor is Mg(2+).

The protein localises to the cytoplasm. The protein resides in the cytosol. It carries out the reaction L-seryl-[protein] + ATP = O-phospho-L-seryl-[protein] + ADP + H(+). The enzyme catalyses L-threonyl-[protein] + ATP = O-phospho-L-threonyl-[protein] + ADP + H(+). The catalysed reaction is ATP + H2O = ADP + phosphate + H(+). In terms of biological role, involved in the final steps of cytoplasmic maturation of the 40S ribosomal subunit. Involved in processing of 18S-E pre-rRNA to the mature 18S rRNA. Required for the recycling of NOB1 and PNO1 from the late 40S precursor. The association with the very late 40S subunit intermediate may involve a translation-like checkpoint point cycle preceeding the binding to the 60S ribosomal subunit. Despite the protein kinase domain is proposed to act predominantly as an ATPase. The catalytic activity regulates its dynamic association with the 40S subunit. In addition to its role in ribosomal biogenesis acts as an adapter protein by recruiting NCL/nucleolin the to PRMT5 complex for its symmetrical methylation. The sequence is that of Serine/threonine-protein kinase RIO1 from Homo sapiens (Human).